We begin with the raw amino-acid sequence, 305 residues long: Acyl transferase (305 aa).

Catalysis depends on charge relay system residues Ser-116, Asp-213, and His-243.

The protein belongs to the LuxD family.

It functions in the pathway lipid metabolism; fatty acid reduction for biolumincescence. Acyl transferase is part of the fatty acid reductase system required for aldehyde biosynthesis; it produces fatty acids for the luminescent reaction. This is Acyl transferase from Shewanella woodyi (strain ATCC 51908 / MS32).